The sequence spans 652 residues: MSDSDKTAARVAPKYVPISSFVESSFFTKLSELKLNEFKLDSSKRDIHGFITSPRRLNKFNDQPTLNLDLQSFDIAEKEANNLHISGELYNVNTIEEFKNINKSDLLNDWGKEVYTRLIQTESLDYKAFNWFFILTFSDLKKYKFYYWVAFPTLNAPWFVTSTRDDSLVEKHTKNITRLLENDGDSENLAFSQLYQVVGESYLDLNSIRSSRNGVFVFLDGCLNKETKPSVQLKNYLYFLAYKGFEDVDVIVYRNDGSSFQVHYELDTDSFNKNVQPKITGWERTSQGKLGPKLADLGSLINPHQLADQAVDLNLKLMKWRIAPELNLDIVKEQRVLLLGAGTLGSYVARALMGWGVRKITFVDNGRISYSNPVRQPLFSFKDCFSDNGQGEMKAARAAEALKEIFPGVSSEGISLEVPMIGHPVSDEAKSKSNFGTLSQLFDDHDIIYLLMDSRESRWLPTVLGYAKNKIVINAALGFDSYLVMRHGNLSQPEESRLGCYYCNDVVAPNDSLTDRTLDQMCTVTRPGVALMASALAVELLVSILQHPDGSKAAQDESTKFGGVPHQIRGFLHNFQQTKLYAPNYKHCSACSHTVISKFEEEGWEFVKKCLNDSGYLEEICGLKQVQEEAEKATEDLMKDMDLDDEDSEWLD.

The GXGXXG motif motif lies at Gly340–Gly345. Cys522 (glycyl thioester intermediate) is an active-site residue.

The protein belongs to the ATG7 family. In terms of assembly, homodimer.

It localises to the cytoplasm. The protein localises to the preautophagosomal structure. Its function is as follows. E1-like activating enzyme involved in the 2 ubiquitin-like systems required for cytoplasm to vacuole transport (Cvt) and autophagy. Activates ATG12 for its conjugation with ATG5 and ATG8 for its conjugation with phosphatidylethanolamine. Both systems are needed for the ATG8 association to Cvt vesicles and autophagosomes membranes. Autophagy is essential for maintenance of amino acid levels and protein synthesis under nitrogen starvation. Required for selective autophagic degradation of the nucleus (nucleophagy) as well as for mitophagy which contributes to regulate mitochondrial quantity and quality by eliminating the mitochondria to a basal level to fulfill cellular energy requirements and preventing excess ROS production. Plays a role in the regulation of filamentous growth and chronological longevity. This Scheffersomyces stipitis (strain ATCC 58785 / CBS 6054 / NBRC 10063 / NRRL Y-11545) (Yeast) protein is Ubiquitin-like modifier-activating enzyme ATG7 (ATG7).